Consider the following 46-residue polypeptide: Photosystem II reaction center protein K (46 aa).

Positions 1–9 (MIDALVLVA) are excised as a propeptide. Residues 10–19 (KLPEAYAIFD) lie on the Lumenal side of the membrane. Residues 20–39 (PLVDVLPVIPVLFLALAFVW) form a helical membrane-spanning segment. At 40-46 (QAAVGFR) the chain is on the cytoplasmic side.

It belongs to the PsbK family. As to quaternary structure, PSII is composed of 1 copy each of membrane proteins PsbA, PsbB, PsbC, PsbD, PsbE, PsbF, PsbH, PsbI, PsbJ, PsbK, PsbL, PsbM, PsbT, PsbX, PsbY, PsbZ, Psb30/Ycf12, peripheral proteins PsbO, CyanoQ(PsbQ), PsbU, PsbV and a large number of cofactors. It forms dimeric complexes. Part of a photosystem II (PSII) assembly intermediate complex PSII-I; crystallized from a strain deleted of psbJ, it forms monomeric PSII before addition of the oxygen evolving complex. PSII-I includes 3 assembly factors not found in mature PSII (Psb27, Psb28 and Psb34). It depends on PSII binds multiple chlorophylls, carotenoids and specific lipids. as a cofactor.

Its subcellular location is the cellular thylakoid membrane. In terms of biological role, one of the components of the core complex of photosystem II (PSII). PSII is a light-driven water:plastoquinone oxidoreductase that uses light energy to abstract electrons from H(2)O, generating O(2) and a proton gradient subsequently used for ATP formation. It consists of a core antenna complex that captures photons, and an electron transfer chain that converts photonic excitation into a charge separation. Required for association of PsbZ and Psb30/Ycf12 with PSII. The protein is Photosystem II reaction center protein K of Thermosynechococcus vestitus (strain NIES-2133 / IAM M-273 / BP-1).